Reading from the N-terminus, the 159-residue chain is MQQGWLSNWLVKHEVVHRSLGFDHRGIETLQIKAGDWDSIAVILYVYGYNYLRSQCAYDVAPGGSLASVYHLTRIQYGIDNPEEVCIKVFVQKDNPRIPSVFWIWRSADFQERESYDMVGISYDNHPRLKRILMPESWIGWPLRKDYITPNFYEIQDAH.

This sequence belongs to the complex I 30 kDa subunit family. As to quaternary structure, NDH is composed of at least 16 different subunits, 5 of which are encoded in the nucleus.

It localises to the plastid. The protein resides in the chloroplast thylakoid membrane. The catalysed reaction is a plastoquinone + NADH + (n+1) H(+)(in) = a plastoquinol + NAD(+) + n H(+)(out). It catalyses the reaction a plastoquinone + NADPH + (n+1) H(+)(in) = a plastoquinol + NADP(+) + n H(+)(out). Functionally, NDH shuttles electrons from NAD(P)H:plastoquinone, via FMN and iron-sulfur (Fe-S) centers, to quinones in the photosynthetic chain and possibly in a chloroplast respiratory chain. The immediate electron acceptor for the enzyme in this species is believed to be plastoquinone. Couples the redox reaction to proton translocation, and thus conserves the redox energy in a proton gradient. In Agrostis stolonifera (Creeping bentgrass), this protein is NAD(P)H-quinone oxidoreductase subunit J, chloroplastic.